A 465-amino-acid chain; its full sequence is Chromosomal replication initiator protein DnaA (465 aa).

Residues 1-87 are domain I, interacts with DnaA modulators; the sequence is MLWTDCLTRL…RPGSILSSSE (87 aa). The interval 81–123 is disordered; sequence SILSSSEQPATTTAALQTAPIPQPAKVKREPEPVANTAVSSKS. The segment covering 88-100 has biased composition (low complexity); it reads QPATTTAALQTAP. The segment at 88-127 is domain II; sequence QPATTTAALQTAPIPQPAKVKREPEPVANTAVSSKSSKKK. The segment at 128–345 is domain III, AAA+ region; the sequence is LLNPQFTFSL…GALNKVVAIS (218 aa). Residues glycine 173, glycine 175, lysine 176, and threonine 177 each contribute to the ATP site. Residues 346 to 465 are domain IV, binds dsDNA; sequence RFKGAPIDLD…YKNLLRLLQS (120 aa).

This sequence belongs to the DnaA family. As to quaternary structure, oligomerizes as a right-handed, spiral filament on DNA at oriC.

Its subcellular location is the cytoplasm. Its function is as follows. Plays an essential role in the initiation and regulation of chromosomal replication. ATP-DnaA binds to the origin of replication (oriC) to initiate formation of the DNA replication initiation complex once per cell cycle. Binds the DnaA box (a 9 base pair repeat at the origin) and separates the double-stranded (ds)DNA. Forms a right-handed helical filament on oriC DNA; dsDNA binds to the exterior of the filament while single-stranded (ss)DNA is stabiized in the filament's interior. The ATP-DnaA-oriC complex binds and stabilizes one strand of the AT-rich DNA unwinding element (DUE), permitting loading of DNA polymerase. After initiation quickly degrades to an ADP-DnaA complex that is not apt for DNA replication. Binds acidic phospholipids. This chain is Chromosomal replication initiator protein DnaA, found in Acinetobacter baumannii (strain AB307-0294).